Reading from the N-terminus, the 357-residue chain is Gas vesicle ATPase GvpN (357 aa).

Positions 22-36 (ATSASKNGGRTTPSA) are enriched in polar residues. Residues 22–43 (ATSASKNGGRTTPSALTPRPRS) are disordered. Residue 72 to 79 (GPAGTGKT) participates in ATP binding.

Belongs to the CbbQ/NirQ/NorQ/GpvN family. In terms of assembly, forms homodimers, probably interacts with other GV proteins including GvpA.

It is found in the gas vesicle. Its subcellular location is the cytoplasm. It catalyses the reaction ATP + H2O = ADP + phosphate + H(+). Its function is as follows. An ATPase that functions in gas vesicle formation. A minor component of the gas vesicle, also found in soluble extracts. Gas vesicles (GV) are hollow, gas filled proteinaceous nanostructures. During planktonic growth they allow positioning of the organism at a favorable depth for light or nutrient acquisition. In Ancylobacter aquaticus, this protein is Gas vesicle ATPase GvpN.